A 321-amino-acid polypeptide reads, in one-letter code: Chitinase-like protein 1 (321 aa).

An N-terminal signal peptide occupies residues 1 to 26 (MVTIRSGSIVILVLLAVSFLALVANG). Cysteine 42 and cysteine 55 are oxidised to a cystine. An N-linked (GlcNAc...) asparagine glycan is attached at asparagine 57. Cysteine 157 and cysteine 167 are oxidised to a cystine. 2 N-linked (GlcNAc...) asparagine glycosylation sites follow: asparagine 208 and asparagine 244. The cysteines at positions 267 and 304 are disulfide-linked. The interval 297-321 (GPNDELSCAEQKPFNPSTVPSSSSS) is disordered. Residues 310-321 (FNPSTVPSSSSS) are compositionally biased toward polar residues.

Belongs to the glycosyl hydrolase 19 family. As to expression, mostly expressed in seedlings shoots and roots, stems, and flowers, and, to a lower extent, in flowers, mature leaves and roots.

The protein localises to the secreted. In terms of biological role, no chitinase activity. Essential for normal plant growth and development. Regulates cell expansion extent and differentiation at least in roots and hypocotyls. Prevents lignin accumulation in the pith. May modulate ethylene-mediated regulation during development. Probably required to establish thermotolerance acclimation. Plays a role for controlled anisotropic cell expansion in the regulation of waving during root gravitropism and thigmotropism. Involved in the root system architecture adaptation to multiple environmental conditions such as nitrate. Contributes to salt tolerance and possibly to drought by preventing the overaccumulation of sodium ions. This Arabidopsis thaliana (Mouse-ear cress) protein is Chitinase-like protein 1 (CTL1).